The sequence spans 129 residues: Large ribosomal subunit protein bL17 (129 aa).

It belongs to the bacterial ribosomal protein bL17 family. Part of the 50S ribosomal subunit. Contacts protein L32.

This is Large ribosomal subunit protein bL17 from Yersinia pseudotuberculosis serotype O:1b (strain IP 31758).